A 130-amino-acid chain; its full sequence is Small ribosomal subunit protein uS8 (130 aa).

It belongs to the universal ribosomal protein uS8 family. Part of the 30S ribosomal subunit. Contacts proteins S5 and S12.

One of the primary rRNA binding proteins, it binds directly to 16S rRNA central domain where it helps coordinate assembly of the platform of the 30S subunit. The protein is Small ribosomal subunit protein uS8 of Hahella chejuensis (strain KCTC 2396).